A 622-amino-acid chain; its full sequence is ATP-dependent lipid A-core flippase (622 aa).

The next 5 membrane-spanning stretches (helical) occupy residues 32–52, 91–111, 192–212, 286–306, and 312–332; these read IVAA…LAAF, VWGT…LVVI, IVLL…FPLL, SPFS…IALW, and YTTI…YAPI. The 312-residue stretch at 33–344 folds into the ABC transmembrane type-1 domain; sequence VAALIAIFGV…LANISIPMQT (312 aa). Positions 378 to 611 constitute an ABC transporter domain; that stretch reads FRNVDVEYRS…NGYYTMLRNI (234 aa). 410–417 contributes to the ATP binding site; that stretch reads GRSGSGKS.

It belongs to the ABC transporter superfamily. Lipid exporter (TC 3.A.1.106) family. As to quaternary structure, homodimer.

The protein resides in the cell inner membrane. It catalyses the reaction ATP + H2O + lipid A-core oligosaccharideSide 1 = ADP + phosphate + lipid A-core oligosaccharideSide 2.. In terms of biological role, involved in lipopolysaccharide (LPS) biosynthesis. Translocates lipid A-core from the inner to the outer leaflet of the inner membrane. Transmembrane domains (TMD) form a pore in the inner membrane and the ATP-binding domain (NBD) is responsible for energy generation. This is ATP-dependent lipid A-core flippase from Neisseria gonorrhoeae (strain ATCC 700825 / FA 1090).